A 289-amino-acid chain; its full sequence is Probable signal peptidase I (289 aa).

The Cytoplasmic portion of the chain corresponds to 1–53; it reads MTETTDSVPEPPSDADQLQPKVSICGLDMPAEVSETAAEAAIGVSEPKKRSAL. A helical membrane pass occupies residues 54–74; that stretch reads WEFAILAVIAIGLYYVMLTFV. Over 75–289 the chain is Extracellular; it reads ARPYLIPSES…VGSVNSQQGQ (215 aa). Residues Ser84 and Lys162 contribute to the active site.

Belongs to the peptidase S26 family.

It is found in the cell membrane. It carries out the reaction Cleavage of hydrophobic, N-terminal signal or leader sequences from secreted and periplasmic proteins.. This chain is Probable signal peptidase I (lepB), found in Mycobacterium leprae (strain TN).